Here is a 116-residue protein sequence, read N- to C-terminus: Ribosome-binding factor A (116 aa).

It belongs to the RbfA family. As to quaternary structure, monomer. Binds 30S ribosomal subunits, but not 50S ribosomal subunits or 70S ribosomes.

The protein resides in the cytoplasm. Its function is as follows. One of several proteins that assist in the late maturation steps of the functional core of the 30S ribosomal subunit. Associates with free 30S ribosomal subunits (but not with 30S subunits that are part of 70S ribosomes or polysomes). Required for efficient processing of 16S rRNA. May interact with the 5'-terminal helix region of 16S rRNA. The sequence is that of Ribosome-binding factor A from Streptococcus mutans serotype c (strain ATCC 700610 / UA159).